The sequence spans 85 residues: Cell division topological specificity factor (85 aa).

The protein belongs to the MinE family.

Functionally, prevents the cell division inhibition by proteins MinC and MinD at internal division sites while permitting inhibition at polar sites. This ensures cell division at the proper site by restricting the formation of a division septum at the midpoint of the long axis of the cell. This is Cell division topological specificity factor from Shewanella amazonensis (strain ATCC BAA-1098 / SB2B).